The following is a 170-amino-acid chain: Inosine/xanthosine triphosphatase (170 aa).

It belongs to the YjjX NTPase family. Homodimer. Mg(2+) is required as a cofactor. Mn(2+) serves as cofactor.

It carries out the reaction XTP + H2O = XDP + phosphate + H(+). The enzyme catalyses ITP + H2O = IDP + phosphate + H(+). Phosphatase that hydrolyzes non-canonical purine nucleotides such as XTP and ITP to their respective diphosphate derivatives. Probably excludes non-canonical purines from DNA/RNA precursor pool, thus preventing their incorporation into DNA/RNA and avoiding chromosomal lesions. This chain is Inosine/xanthosine triphosphatase, found in Aliivibrio fischeri (strain MJ11) (Vibrio fischeri).